A 680-amino-acid polypeptide reads, in one-letter code: Oligopeptidase A (680 aa).

Histidine 469 contacts Zn(2+). Glutamate 470 is a catalytic residue. Residues histidine 473 and histidine 476 each contribute to the Zn(2+) site.

Belongs to the peptidase M3 family. It depends on Zn(2+) as a cofactor.

It carries out the reaction Hydrolysis of oligopeptides, with broad specificity. Gly or Ala commonly occur as P1 or P1' residues, but more distant residues are also important, as is shown by the fact that Z-Gly-Pro-Gly-|-Gly-Pro-Ala is cleaved, but not Z-(Gly)(5).. Its function is as follows. May play a specific role in the degradation of signal peptides after they are released from precursor forms of secreted proteins. Can cleave N-acetyl-L-Ala(4). This chain is Oligopeptidase A (prlC), found in Escherichia coli (strain K12).